The sequence spans 223 residues: 7-cyano-7-deazaguanine synthase (223 aa).

Phe15–Leu25 is a binding site for ATP. Zn(2+) is bound by residues Cys191, Cys200, Cys203, and Cys206.

It belongs to the QueC family. In terms of assembly, homodimer. Zn(2+) serves as cofactor.

The catalysed reaction is 7-carboxy-7-deazaguanine + NH4(+) + ATP = 7-cyano-7-deazaguanine + ADP + phosphate + H2O + H(+). It functions in the pathway purine metabolism; 7-cyano-7-deazaguanine biosynthesis. Its function is as follows. Catalyzes the ATP-dependent conversion of 7-carboxy-7-deazaguanine (CDG) to 7-cyano-7-deazaguanine (preQ(0)). The sequence is that of 7-cyano-7-deazaguanine synthase from Staphylococcus saprophyticus subsp. saprophyticus (strain ATCC 15305 / DSM 20229 / NCIMB 8711 / NCTC 7292 / S-41).